The primary structure comprises 328 residues: Tetraacyldisaccharide 4'-kinase (328 aa).

55 to 62 contacts ATP; the sequence is TAGGNGKT.

The protein belongs to the LpxK family.

It carries out the reaction a lipid A disaccharide + ATP = a lipid IVA + ADP + H(+). It participates in glycolipid biosynthesis; lipid IV(A) biosynthesis; lipid IV(A) from (3R)-3-hydroxytetradecanoyl-[acyl-carrier-protein] and UDP-N-acetyl-alpha-D-glucosamine: step 6/6. Its function is as follows. Transfers the gamma-phosphate of ATP to the 4'-position of a tetraacyldisaccharide 1-phosphate intermediate (termed DS-1-P) to form tetraacyldisaccharide 1,4'-bis-phosphate (lipid IVA). The protein is Tetraacyldisaccharide 4'-kinase of Escherichia coli O6:K15:H31 (strain 536 / UPEC).